The sequence spans 360 residues: UPF0324 membrane protein DVU_0123 (360 aa).

10 helical membrane-spanning segments follow: residues 20–42 (VTES…FVAP), 57–79 (KDFI…PAVF), 100–122 (SYSL…VFLF), 142–164 (AACL…APAV), 171–193 (MAYS…PLIG), 203–225 (FGAF…FGFS), 232–254 (AGIY…AIMA), 278–297 (FPLF…AGVL), 310–327 (EWAF…TRLS), and 337–359 (FLFG…LLFM).

The protein belongs to the UPF0324 family.

Its subcellular location is the cell membrane. This is UPF0324 membrane protein DVU_0123 from Nitratidesulfovibrio vulgaris (strain ATCC 29579 / DSM 644 / CCUG 34227 / NCIMB 8303 / VKM B-1760 / Hildenborough) (Desulfovibrio vulgaris).